The sequence spans 311 residues: Homoserine kinase (311 aa).

89–99 serves as a coordination point for ATP; that stretch reads PFARGLGSSAT.

Belongs to the GHMP kinase family. Homoserine kinase subfamily.

It is found in the cytoplasm. The catalysed reaction is L-homoserine + ATP = O-phospho-L-homoserine + ADP + H(+). Its pathway is amino-acid biosynthesis; L-threonine biosynthesis; L-threonine from L-aspartate: step 4/5. Catalyzes the ATP-dependent phosphorylation of L-homoserine to L-homoserine phosphate. This Halothermothrix orenii (strain H 168 / OCM 544 / DSM 9562) protein is Homoserine kinase.